A 378-amino-acid polypeptide reads, in one-letter code: Quinolinate synthase (378 aa).

Residues histidine 59 and serine 80 each contribute to the iminosuccinate site. Cysteine 125 contributes to the [4Fe-4S] cluster binding site. Iminosuccinate-binding positions include 151-153 (YAN) and serine 168. Cysteine 212 provides a ligand contact to [4Fe-4S] cluster. Iminosuccinate-binding positions include 238–240 (HPE) and threonine 255. Cysteine 309 lines the [4Fe-4S] cluster pocket.

It belongs to the quinolinate synthase family. Type 1 subfamily. Requires [4Fe-4S] cluster as cofactor.

The protein localises to the cytoplasm. The enzyme catalyses iminosuccinate + dihydroxyacetone phosphate = quinolinate + phosphate + 2 H2O + H(+). Its pathway is cofactor biosynthesis; NAD(+) biosynthesis; quinolinate from iminoaspartate: step 1/1. Functionally, catalyzes the condensation of iminoaspartate with dihydroxyacetone phosphate to form quinolinate. This chain is Quinolinate synthase, found in Burkholderia thailandensis (strain ATCC 700388 / DSM 13276 / CCUG 48851 / CIP 106301 / E264).